Consider the following 363-residue polypeptide: Flagellar P-ring protein (363 aa).

The first 20 residues, 1–20, serve as a signal peptide directing secretion; that stretch reads MKYRLIVALAMLVLSLPSQA.

The protein belongs to the FlgI family. As to quaternary structure, the basal body constitutes a major portion of the flagellar organelle and consists of four rings (L,P,S, and M) mounted on a central rod.

The protein resides in the periplasm. Its subcellular location is the bacterial flagellum basal body. In terms of biological role, assembles around the rod to form the L-ring and probably protects the motor/basal body from shearing forces during rotation. The protein is Flagellar P-ring protein of Shewanella sp. (strain ANA-3).